The primary structure comprises 147 residues: SPI-1 type 3 secretion system pilotin (147 aa).

The signal sequence occupies residues 1–15 (MKKFYSCLPVFLLIG). The N-palmitoyl cysteine moiety is linked to residue Cys16. A lipid anchor (S-diacylglycerol cysteine) is attached at Cys16.

This sequence belongs to the InvH family.

Its subcellular location is the cell outer membrane. In terms of biological role, involved in the synthesis of the type III secretion system (T3SS), also called injectisome, which is used to inject bacterial effector proteins into eukaryotic host cells. Pilot protein that is required for the proper localization of the secretin InvG/SctC in the outer membrane. Necessary for efficient adherence and entry of these organisms into cultured epithelial cells. The sequence is that of SPI-1 type 3 secretion system pilotin from Salmonella typhimurium (strain SL1344).